The chain runs to 252 residues: 3-dehydroquinate dehydratase (252 aa).

Residues serine 21, 46–48 (EWR), and arginine 82 contribute to the 3-dehydroquinate site. Histidine 143 (proton donor/acceptor) is an active-site residue. The active-site Schiff-base intermediate with substrate is lysine 170. 3-dehydroquinate-binding residues include arginine 213, serine 232, and glutamine 236.

This sequence belongs to the type-I 3-dehydroquinase family. As to quaternary structure, dimer of dimers.

It catalyses the reaction 3-dehydroquinate = 3-dehydroshikimate + H2O. The protein operates within metabolic intermediate biosynthesis; chorismate biosynthesis; chorismate from D-erythrose 4-phosphate and phosphoenolpyruvate: step 3/7. Inhibited by (2R)-2-methyl-3-dehydroquinic acid. Functionally, involved in the third step of the chorismate pathway, which leads to the biosynthesis of aromatic amino acids. Catalyzes the cis-dehydration of 3-dehydroquinate (DHQ) and introduces the first double bond of the aromatic ring to yield 3-dehydroshikimate. The reaction involves the formation of an imine intermediate between the keto group of 3-dehydroquinate and the epsilon-amino group of Lys-170 at the active site. The sequence is that of 3-dehydroquinate dehydratase from Salmonella typhi.